An 852-amino-acid polypeptide reads, in one-letter code: Bifunctional uridylyltransferase/uridylyl-removing enzyme (852 aa).

Residues Met-1–Ile-318 form a uridylyltransferase region. The interval Asp-319–Phe-672 is uridylyl-removing. Positions Val-436–Leu-558 constitute an HD domain. ACT domains lie at Gln-673 to Arg-757 and Ser-785 to Ala-852.

This sequence belongs to the GlnD family. It depends on Mg(2+) as a cofactor.

The enzyme catalyses [protein-PII]-L-tyrosine + UTP = [protein-PII]-uridylyl-L-tyrosine + diphosphate. The catalysed reaction is [protein-PII]-uridylyl-L-tyrosine + H2O = [protein-PII]-L-tyrosine + UMP + H(+). With respect to regulation, uridylyltransferase (UTase) activity is inhibited by glutamine, while glutamine activates uridylyl-removing (UR) activity. Its function is as follows. Modifies, by uridylylation and deuridylylation, the PII regulatory proteins (GlnB and homologs), in response to the nitrogen status of the cell that GlnD senses through the glutamine level. Under low glutamine levels, catalyzes the conversion of the PII proteins and UTP to PII-UMP and PPi, while under higher glutamine levels, GlnD hydrolyzes PII-UMP to PII and UMP (deuridylylation). Thus, controls uridylylation state and activity of the PII proteins, and plays an important role in the regulation of nitrogen assimilation and metabolism. The chain is Bifunctional uridylyltransferase/uridylyl-removing enzyme from Neisseria gonorrhoeae (strain ATCC 700825 / FA 1090).